The primary structure comprises 1373 residues: Actin cytoskeleton-regulatory complex protein PAN1 (1373 aa).

An EH 1 domain is found at 116–205 (DQKKFEHLFR…EKWANEVKSF (90 aa)). In terms of domain architecture, EF-hand 1 spans 149 to 184 (LTPVTLAEIWSLSDTNKSGSLLFPEFALSLHLCSMA). Disordered regions lie at residues 271–362 (GGGL…QQQS) and 385–409 (AQRT…QPTG). 2 stretches are compositionally biased toward low complexity: residues 290–309 (TTSF…PLAS) and 341–362 (PQQL…QQQS). The segment covering 389–408 (GPLQSQSTGFQPAPLQSQPT) has biased composition (polar residues). The region spanning 465–554 (EKSIYDGIFQ…PELIPPSNKY (90 aa)) is the EH 2 domain. In terms of domain architecture, EF-hand 2 spans 498–533 (LSRPDLESIWTLADTSDRGKLNKDEFSVAMHLVYRR). Disordered stretches follow at residues 562–622 (MKNS…SSSD), 739–758 (SWNP…NGEV), 876–914 (QNSS…RTPE), 931–1089 (RLAK…TAED), 1103–1335 (EAVP…APPV), and 1349–1373 (GKSL…TVLS). Residues 571 to 580 (NNKSYSGGKQ) are compositionally biased toward polar residues. A compositionally biased stretch (basic and acidic residues) spans 581–590 (TKSDGTRFKN). Residues 739-752 (SWNPDSNESEIQGT) show a composition bias toward polar residues. Low complexity-rich tracts occupy residues 878–909 (SSSL…ASSS) and 965–977 (PAVV…SPPV). The stretch at 1007–1066 (DDEEYAAILKQKQQLEAKEKERKLAKQKQKQARLDKIKKEMEEIKRRQAEAEAEEDSDEE) forms a coiled coil. Composition is skewed to basic and acidic residues over residues 1019-1030 (QQLEAKEKERKL) and 1038-1056 (ARLD…RQAE). The segment covering 1057–1067 (AEAEEDSDEEP) has biased composition (acidic residues). Composition is skewed to polar residues over residues 1070 to 1079 (VPTYTVSNSA) and 1118 to 1134 (NPFS…STNP). Residues 1139 to 1149 (TTKESTIDPKK) are compositionally biased toward basic and acidic residues. A compositionally biased stretch (polar residues) spans 1154-1166 (RASQRGLSKNDGW). Residues 1167–1177 (SDSDDNESEDD) show a composition bias toward acidic residues. Positions 1250–1326 (PPIPTEVPPI…PPPPGPPPPV (77 aa)) are enriched in pro residues. One can recognise a WH2 domain in the interval 1338–1355 (DIGALLGQIQGGKSLKKV). Positions 1357–1373 (ASQQKISSNDLAGTVLS) are enriched in polar residues.

Belongs to the PAN1 family. In terms of assembly, component of the PAN1 actin cytoskeleton-regulatory complex.

The protein resides in the cell membrane. It is found in the endosome membrane. The protein localises to the cytoplasm. It localises to the cytoskeleton. Its subcellular location is the actin patch. Component of the PAN1 actin cytoskeleton-regulatory complex required for the internalization of endosomes during actin-coupled endocytosis. The complex links the site of endocytosis to the cell membrane-associated actin cytoskeleton. Mediates uptake of external molecules and vacuolar degradation of plasma membrane proteins. Plays a role in the proper organization of the cell membrane-associated actin cytoskeleton and promotes its destabilization. This Scheffersomyces stipitis (strain ATCC 58785 / CBS 6054 / NBRC 10063 / NRRL Y-11545) (Yeast) protein is Actin cytoskeleton-regulatory complex protein PAN1 (PAN1).